The following is a 314-amino-acid chain: tRNA dimethylallyltransferase (314 aa).

10–17 serves as a coordination point for ATP; it reads GPTAVGKT. 12-17 contributes to the substrate binding site; it reads TAVGKT. Interaction with substrate tRNA stretches follow at residues 35-38, 160-164, 239-244, and 272-279; these read DSMQ, RRVIR, QAIGYK, and KRQLTWFR.

Belongs to the IPP transferase family. Monomer. Mg(2+) serves as cofactor.

It catalyses the reaction adenosine(37) in tRNA + dimethylallyl diphosphate = N(6)-dimethylallyladenosine(37) in tRNA + diphosphate. Its function is as follows. Catalyzes the transfer of a dimethylallyl group onto the adenine at position 37 in tRNAs that read codons beginning with uridine, leading to the formation of N6-(dimethylallyl)adenosine (i(6)A). The polypeptide is tRNA dimethylallyltransferase (miaA) (Halalkalibacterium halodurans (strain ATCC BAA-125 / DSM 18197 / FERM 7344 / JCM 9153 / C-125) (Bacillus halodurans)).